Here is a 663-residue protein sequence, read N- to C-terminus: Protein MNE1 (663 aa).

In Saccharomyces cerevisiae (strain ATCC 204508 / S288c) (Baker's yeast), this protein is Protein MNE1 (MNE1).